A 443-amino-acid polypeptide reads, in one-letter code: MPSRVEDYEVLHSIGTGSYGRCQKIRRKSDGKILVWKELDYGSMTEVEKQMLVSEVNLLRELKHPNIVSYYDRIIDRTNTTLYIVMEYCEGGDLASVISKGTKDRQYLEEEFVLRVMTQLTLALKECHRRSDGGHTVLHRDLKPANVFLDSKHNVKLGDFGLARILNHDTSFAKTFVGTPYYMSPEQMSCLSYNEKSDIWSLGCLLYELCALMPPFTAFNQKELAGKIREGRFRRIPYRYSDGLNDLITRMLNLKDYHRPSVEEILESPLIADLVAEEQRRNLERRGRRSGEPSKLPDSSPVLSELKLKERQLQDREQALRAREDILEQKERELCIRERLAEDKLARAESLMKNYSLLKEHRLLCLAGGPELDLPSSAMKKKVHFHGESKENTARSENSESYLAKSKCRDLKKRLHAAQLRAQALADIEKNYQLKSRQILGMR.

Positions 8–271 (YEVLHSIGTG…VEEILESPLI (264 aa)) constitute a Protein kinase domain. ATP is bound by residues 14 to 22 (IGTGSYGRC) and K37. The Proton acceptor role is filled by D141. T170 is subject to Phosphothreonine; by autocatalysis. S171 is subject to Phosphoserine; by autocatalysis. Residues T175 and T179 each carry the phosphothreonine; by autocatalysis modification. Phosphoserine is present on S184. S241 bears the Phosphoserine; by autocatalysis mark. Positions 264 to 443 (EILESPLIAD…LKSRQILGMR (180 aa)) are interaction with PCNT. Positions 282–292 (NLERRGRRSGE) are enriched in basic and acidic residues. Residues 282 to 303 (NLERRGRRSGEPSKLPDSSPVL) form a disordered region. S300 is subject to Phosphoserine. The interval 301–443 (PVLSELKLKE…LKSRQILGMR (143 aa)) is interaction with CEP85. Residues 303–361 (LSELKLKERQLQDREQALRAREDILEQKERELCIRERLAEDKLARAESLMKNYSLLKEH) are a coiled coil. Residues 306 to 334 (LKLKERQLQDREQALRAREDILEQKEREL) form a leucine-zipper region. The segment at 329-443 (QKERELCIRE…LKSRQILGMR (115 aa)) is necessary for interaction with MAD1L1. Residues 333–370 (ELCIRERLAEDKLARAESLMKNYSLLKEHRLLCLAGGP) form a required for microtubule binding and for localization to the centrosomes region. A Phosphoserine; by STK3/MST2 modification is found at S356. The disordered stretch occupies residues 383–402 (VHFHGESKENTARSENSESY). The span at 385–398 (FHGESKENTARSEN) shows a compositional bias: basic and acidic residues. Phosphoserine is present on residues S389, S396, and S401. The interaction with SAV1 and STK3/MST2 stretch occupies residues 402 to 437 (YLAKSKCRDLKKRLHAAQLRAQALADIEKNYQLKSR). The stretch at 403–427 (LAKSKCRDLKKRLHAAQLRAQALAD) forms a coiled coil. S436 carries the post-translational modification Phosphoserine; by STK3/MST2.

This sequence belongs to the protein kinase superfamily. NEK Ser/Thr protein kinase family. NIMA subfamily. In terms of assembly, forms homodimers and heterodimers. Interacts with CDC20, CTNB1, MAD1L1, MAD2L1, MAPK, NEK11, NPM1, NDC80, PCNT, PPP1CA, PPP1CC and SGO1. Interacts with STK3/MST2 (via SARAH domain) and SAV1 (via SARAH domain). Interacts with NECAB3 and HMGA2. Interacts with CEP68; the interaction leads to phosphorylation of CEP68. Interacts with CNTLN; the interaction leads to phosphorylation of CNTLN. Interacts with CEP85. The cofactor is Mg(2+). In terms of processing, activated by autophosphorylation. Protein phosphatase 1 represses autophosphorylation and activation of isoform 1 by dephosphorylation. Phosphorylation by STK3/MST2 is necessary for its localization to the centrosome. Most abundantly expressed in testis. Low levels found in mid-gestation embryo, ovary, placenta, intestine, thymus and skin. Within the testis, expression restricted to germ cells with highest levels detected in spermatocytes at pachytene and diplotene stages. Also expressed in meiotic pachytene oocytes.

Its subcellular location is the nucleus. The protein resides in the nucleolus. It localises to the cytoplasm. The protein localises to the cytoskeleton. It is found in the microtubule organizing center. Its subcellular location is the centrosome. The protein resides in the spindle pole. It localises to the chromosome. The protein localises to the centromere. It is found in the kinetochore. The enzyme catalyses L-seryl-[protein] + ATP = O-phospho-L-seryl-[protein] + ADP + H(+). It catalyses the reaction L-threonyl-[protein] + ATP = O-phospho-L-threonyl-[protein] + ADP + H(+). Its catalytic activity is inhibited by the inhibitor CCT241950. In the presence of this inhibitor, displays an autoinhibited conformation: Tyr-70 side chain points into the active site, interacts with the activation loop, and blocks the alphaC helix. Functionally, protein kinase which is involved in the control of centrosome separation and bipolar spindle formation in mitotic cells and chromatin condensation in meiotic cells. Regulates centrosome separation (essential for the formation of bipolar spindles and high-fidelity chromosome separation) by phosphorylating centrosomal proteins such as CROCC, CEP250 and NINL, resulting in their displacement from the centrosomes. Regulates kinetochore microtubule attachment stability in mitosis via phosphorylation of NDC80. Involved in regulation of mitotic checkpoint protein complex via phosphorylation of CDC20 and MAD2L1. Plays an active role in chromatin condensation during the first meiotic division through phosphorylation of HMGA2. Phosphorylates: PPP1CC; SGO1; NECAB3 and NPM1. Essential for localization of MAD2L1 to kinetochore and MAPK1 and NPM1 to the centrosome. Phosphorylates CEP68 and CNTLN directly or indirectly. NEK2-mediated phosphorylation of CEP68 promotes CEP68 dissociation from the centrosome and its degradation at the onset of mitosis. Phosphorylates and activates NEK11 in G1/S-arrested cells. Involved in the regulation of centrosome disjunction. This Mus musculus (Mouse) protein is Serine/threonine-protein kinase Nek2 (Nek2).